The following is a 982-amino-acid chain: Probable DNA-directed RNA polymerase (982 aa).

This sequence belongs to the RNA polymerase beta chain family.

The catalysed reaction is RNA(n) + a ribonucleoside 5'-triphosphate = RNA(n+1) + diphosphate. Its function is as follows. The presence of the two linear plasmids, termed pGKL1 and pGKL2, in strains of Kluyveromyces lactis confers the killer phenotype to the host cell, by promoting the secretion of a toxin able to inhibit the growth of sensitive strains. In Kluyveromyces lactis (strain ATCC 8585 / CBS 2359 / DSM 70799 / NBRC 1267 / NRRL Y-1140 / WM37) (Yeast), this protein is Probable DNA-directed RNA polymerase.